A 194-amino-acid polypeptide reads, in one-letter code: Exopolysaccharide II synthesis transcriptional activator ExpG (194 aa).

Positions 49–184 (YFELARVMER…AFQTLHRLEL (136 aa)) constitute an HTH marR-type domain.

Transcriptional activator of genes for galactoglucan synthesis (exopolysaccharide II or EPS II). The sequence is that of Exopolysaccharide II synthesis transcriptional activator ExpG (expG) from Rhizobium meliloti (strain 1021) (Ensifer meliloti).